Reading from the N-terminus, the 225-residue chain is Suppressor of cytokine signaling 3 (225 aa).

The segment at 22–33 is kinase inhibitory region (KIR); that stretch reads LKTFSSKSEYQL. The interval 34-45 is extended SH2 subdomain (ESS); it reads VVNAVRKLQESG. One can recognise an SH2 domain in the interval 46 to 142; the sequence is FYWSAVTGGE…APSFSLPPTE (97 aa). The segment at 141-160 is disordered; sequence TEPSFEVQEQPPAQALPGGT. Residues 177 to 224 enclose the SOCS box domain; it reads VLSRPLSSNVATLQHLCRKTVNGHLDSYEKVTQLPGPIREFLDQYDAP.

Interacts with multiple activated proteins of the tyrosine kinase signaling pathway including IGF1 receptor, insulin receptor and JAK2. Binding to JAK2 is mediated through the KIR and SH2 domains to a phosphorylated tyrosine residue within the JAK2 JH1 domain. Binds specific activated tyrosine residues of the leptin, EPO, IL12, GSCF and gp130 receptors. Interaction with CSNK1E stabilize SOCS3 protein. Component of the probable ECS(SOCS3) E3 ubiquitin-protein ligase complex which contains CUL5, RNF7/RBX2, Elongin BC complex and SOCS3. Interacts with CUL5, RNF7, ELOB and ELOC. Interacts with FGFR3. Interacts with INSR. Interacts with BCL10; this interaction may interfere with BCL10-binding with PELI2. Interacts with NOD2 (via CARD domain); the interaction promotes NOD2 degradation. Phosphorylated on tyrosine residues after stimulation by the cytokines, IL-2, EPO or IGF1.

It functions in the pathway protein modification; protein ubiquitination. In terms of biological role, SOCS family proteins form part of a classical negative feedback system that regulates cytokine signal transduction. SOCS3 is involved in negative regulation of cytokines that signal through the JAK/STAT pathway. Inhibits cytokine signal transduction by binding to tyrosine kinase receptors including IL6ST/gp130, LIF, erythropoietin, insulin, IL12, GCSF and leptin receptors. Binding to JAK2 inhibits its kinase activity and regulates IL6 signaling. Suppresses fetal liver erythropoiesis. Regulates onset and maintenance of allergic responses mediated by T-helper type 2 cells. Probable substrate recognition component of a SCF-like ECS (Elongin BC-CUL2/5-SOCS-box protein) E3 ubiquitin-protein ligase complex which mediates the ubiquitination and subsequent proteasomal degradation of target proteins. The chain is Suppressor of cytokine signaling 3 from Rattus norvegicus (Rat).